A 378-amino-acid chain; its full sequence is MSKRDYYETLGVSQDASEKEVKKAYKKLAMKYHPDRTQGDKSKEETFKEVKEAYEILNDDQKRAAYDQYGHAAFEQGGNGGGGGGHGGGFGQDFGDIFGDIFGGGGGGRGRQRQQRGSDLRYNVDLSLEDAVKGKSLEIKVPTYVSCEPCDGSGAKKGTSAKTCSTCHGHGQVQMRQGLFAVQQTCPTCSGKGKVIADKCTSCRGQGRVEKTKTLSVKIPAGVDTGDRIRLSGEGEAGEHGAPAGDLYVQVNVRDHEIFVRDENHLYCEVPISFVTAALGGDIEVPTLGGKVKLKVPKETQTGKMFRLRGKGVKSVRSSTTGDLMCKVVIETPVNLSGDQADLLRQLEEKMASSSKKHSPKETGFFDGVKKFFDDLKS.

The region spanning 5–70 (DYYETLGVSQ…QKRAAYDQYG (66 aa)) is the J domain. A CR-type zinc finger spans residues 134 to 212 (GKSLEIKVPT…CRGQGRVEKT (79 aa)). Residues cysteine 147, cysteine 150, cysteine 164, cysteine 167, cysteine 186, cysteine 189, cysteine 200, and cysteine 203 each contribute to the Zn(2+) site. CXXCXGXG motif repeat units lie at residues 147-154 (CEPCDGSG), 164-171 (CSTCHGHG), 186-193 (CPTCSGKG), and 200-207 (CTSCRGQG).

Belongs to the DnaJ family. In terms of assembly, homodimer. The cofactor is Zn(2+).

The protein resides in the cytoplasm. Its function is as follows. Participates actively in the response to hyperosmotic and heat shock by preventing the aggregation of stress-denatured proteins and by disaggregating proteins, also in an autonomous, DnaK-independent fashion. Unfolded proteins bind initially to DnaJ; upon interaction with the DnaJ-bound protein, DnaK hydrolyzes its bound ATP, resulting in the formation of a stable complex. GrpE releases ADP from DnaK; ATP binding to DnaK triggers the release of the substrate protein, thus completing the reaction cycle. Several rounds of ATP-dependent interactions between DnaJ, DnaK and GrpE are required for fully efficient folding. Also involved, together with DnaK and GrpE, in the DNA replication of plasmids through activation of initiation proteins. The protein is Chaperone protein DnaJ of Colwellia psychrerythraea (strain 34H / ATCC BAA-681) (Vibrio psychroerythus).